Here is a 366-residue protein sequence, read N- to C-terminus: Ferrochelatase (366 aa).

The Fe cation site is built by histidine 210 and glutamate 293.

The protein belongs to the ferrochelatase family.

The protein localises to the cytoplasm. It catalyses the reaction heme b + 2 H(+) = protoporphyrin IX + Fe(2+). It functions in the pathway porphyrin-containing compound metabolism; protoheme biosynthesis; protoheme from protoporphyrin-IX: step 1/1. Catalyzes the ferrous insertion into protoporphyrin IX. The protein is Ferrochelatase of Leptospira borgpetersenii serovar Hardjo-bovis (strain L550).